The chain runs to 300 residues: MKTGNQFKTVALVGRSNTPGIAEPLATLADSIATLGFEVVFEGDTAREIGIAGYPALTPAEIGARADVAIVLGGDGTMLGIGRQLAPYRTPLIGINHGRLGFITDIAASDMQALVPVMLAGKFEREERSLLEARIVRDGEPIYHALAFNDVVVNRSGFSGMVELRASVDGRYMYNQRSDGLIVATPTGSTAYALSSAGPILHPQLAGVVLVPIAPHALSNRPIVLPDDSKIAIQIVGGRDVNVNFDMQSFTSLELNDTIEVRRSKHTVPFLHPIGYSYYTTLRKKLHWNEHASNEDDKAS.

Residue Asp-75 is the Proton acceptor of the active site. NAD(+)-binding positions include 75–76 (DG), 149–150 (ND), Arg-177, Asp-179, 190–195 (TAYALS), Ala-214, and Gln-248.

Belongs to the NAD kinase family. A divalent metal cation serves as cofactor.

The protein resides in the cytoplasm. It carries out the reaction NAD(+) + ATP = ADP + NADP(+) + H(+). In terms of biological role, involved in the regulation of the intracellular balance of NAD and NADP, and is a key enzyme in the biosynthesis of NADP. Catalyzes specifically the phosphorylation on 2'-hydroxyl of the adenosine moiety of NAD to yield NADP. The protein is NAD kinase of Burkholderia cenocepacia (strain HI2424).